The following is a 169-amino-acid chain: Peptide methionine sulfoxide reductase MsrA (169 aa).

The active site involves Cys10.

The protein belongs to the MsrA Met sulfoxide reductase family.

The catalysed reaction is L-methionyl-[protein] + [thioredoxin]-disulfide + H2O = L-methionyl-(S)-S-oxide-[protein] + [thioredoxin]-dithiol. It catalyses the reaction [thioredoxin]-disulfide + L-methionine + H2O = L-methionine (S)-S-oxide + [thioredoxin]-dithiol. Has an important function as a repair enzyme for proteins that have been inactivated by oxidation. Catalyzes the reversible oxidation-reduction of methionine sulfoxide in proteins to methionine. The polypeptide is Peptide methionine sulfoxide reductase MsrA (Streptococcus pyogenes serotype M6 (strain ATCC BAA-946 / MGAS10394)).